The following is a 79-amino-acid chain: Acyl carrier protein (79 aa).

Residues 3–78 (QEILEKVCSI…DAVKFIEEKK (76 aa)) enclose the Carrier domain. Ser-38 bears the O-(pantetheine 4'-phosphoryl)serine mark.

It belongs to the acyl carrier protein (ACP) family. Post-translationally, 4'-phosphopantetheine is transferred from CoA to a specific serine of apo-ACP by AcpS. This modification is essential for activity because fatty acids are bound in thioester linkage to the sulfhydryl of the prosthetic group.

It is found in the cytoplasm. It functions in the pathway lipid metabolism; fatty acid biosynthesis. Its function is as follows. Carrier of the growing fatty acid chain in fatty acid biosynthesis. This is Acyl carrier protein from Prochlorococcus marinus (strain MIT 9312).